Here is a 432-residue protein sequence, read N- to C-terminus: Glutamyl-tRNA reductase (432 aa).

Substrate contacts are provided by residues 55-58, serine 113, 118-120, and glutamine 124; these read TCNR and EAQ. Catalysis depends on cysteine 56, which acts as the Nucleophile. 193–198 is an NADP(+) binding site; that stretch reads GAGEMI.

This sequence belongs to the glutamyl-tRNA reductase family. As to quaternary structure, homodimer.

It carries out the reaction (S)-4-amino-5-oxopentanoate + tRNA(Glu) + NADP(+) = L-glutamyl-tRNA(Glu) + NADPH + H(+). Its pathway is porphyrin-containing compound metabolism; protoporphyrin-IX biosynthesis; 5-aminolevulinate from L-glutamyl-tRNA(Glu): step 1/2. In terms of biological role, catalyzes the NADPH-dependent reduction of glutamyl-tRNA(Glu) to glutamate 1-semialdehyde (GSA). In Paracidovorax citrulli (strain AAC00-1) (Acidovorax citrulli), this protein is Glutamyl-tRNA reductase.